The primary structure comprises 400 residues: NADH-quinone oxidoreductase subunit D (400 aa).

Belongs to the complex I 49 kDa subunit family. In terms of assembly, NDH-1 is composed of 14 different subunits. Subunits NuoB, C, D, E, F, and G constitute the peripheral sector of the complex.

It is found in the cell inner membrane. It carries out the reaction a quinone + NADH + 5 H(+)(in) = a quinol + NAD(+) + 4 H(+)(out). NDH-1 shuttles electrons from NADH, via FMN and iron-sulfur (Fe-S) centers, to quinones in the respiratory chain. The immediate electron acceptor for the enzyme in this species is believed to be ubiquinone. Couples the redox reaction to proton translocation (for every two electrons transferred, four hydrogen ions are translocated across the cytoplasmic membrane), and thus conserves the redox energy in a proton gradient. This Granulibacter bethesdensis (strain ATCC BAA-1260 / CGDNIH1) protein is NADH-quinone oxidoreductase subunit D.